Here is a 288-residue protein sequence, read N- to C-terminus: ATP synthase gamma chain (288 aa).

The protein belongs to the ATPase gamma chain family. In terms of assembly, F-type ATPases have 2 components, CF(1) - the catalytic core - and CF(0) - the membrane proton channel. CF(1) has five subunits: alpha(3), beta(3), gamma(1), delta(1), epsilon(1). CF(0) has three main subunits: a, b and c.

Its subcellular location is the cell inner membrane. Its function is as follows. Produces ATP from ADP in the presence of a proton gradient across the membrane. The gamma chain is believed to be important in regulating ATPase activity and the flow of protons through the CF(0) complex. The sequence is that of ATP synthase gamma chain from Actinobacillus pleuropneumoniae serotype 3 (strain JL03).